The sequence spans 330 residues: mRNA-capping enzyme (330 aa).

The N6-GMP-lysine intermediate role is filled by Lys82.

Belongs to the eukaryotic GTase family. In terms of assembly, monomer. The cofactor is Mg(2+). It depends on Mn(2+) as a cofactor.

The catalysed reaction is a 5'-end diphospho-ribonucleoside in mRNA + GTP + H(+) = a 5'-end (5'-triphosphoguanosine)-ribonucleoside in mRNA + diphosphate. Functionally, mRNA capping. Transfers a GMP cap onto the end of mRNA that terminates with a 5'-diphosphate tail. The sequence is that of mRNA-capping enzyme from Chlorella (PBCV-1).